Consider the following 180-residue polypeptide: ATP-dependent protease subunit HslV (180 aa).

Threonine 7 is an active-site residue. Positions 164, 167, and 170 each coordinate Na(+).

This sequence belongs to the peptidase T1B family. HslV subfamily. In terms of assembly, a double ring-shaped homohexamer of HslV is capped on each side by a ring-shaped HslU homohexamer. The assembly of the HslU/HslV complex is dependent on binding of ATP.

Its subcellular location is the cytoplasm. It catalyses the reaction ATP-dependent cleavage of peptide bonds with broad specificity.. Its activity is regulated as follows. Allosterically activated by HslU binding. In terms of biological role, protease subunit of a proteasome-like degradation complex believed to be a general protein degrading machinery. The chain is ATP-dependent protease subunit HslV from Brevibacillus brevis (strain 47 / JCM 6285 / NBRC 100599).